The following is a 626-amino-acid chain: Chaperone protein HtpG (626 aa).

The interval 1-339 (MSQNQETRGF…SNDLPLNVSR (339 aa)) is a; substrate-binding. The interval 340–555 (EILQDNKITA…NDQMTTQMAK (216 aa)) is b. Positions 556-626 (LFAAAGQPVP…FIKRINKLLG (71 aa)) are c.

Belongs to the heat shock protein 90 family. In terms of assembly, homodimer.

It is found in the cytoplasm. In terms of biological role, molecular chaperone. Has ATPase activity. This chain is Chaperone protein HtpG, found in Haemophilus influenzae (strain PittEE).